The sequence spans 437 residues: La-related protein 7 homolog (437 aa).

Residues 38–145 (SKSPSLTIPK…KRKKKFDNRT (108 aa)) form the HTH La-type RNA-binding domain. Residues 279 to 397 (ELSQSCFLKI…QRSSIDEIKA (119 aa)) form the xRRM domain. Over residues 417 to 427 (RRPVSKRKNKA) the composition is skewed to basic residues. The segment at 417 to 437 (RRPVSKRKNKAINKMSTEVKK) is disordered.

It belongs to the LARP7 family. Component of the telomerase holoenzyme complex composed minimally of the catalytic subunit p123 and the telomerase RNA template component. The mature form of the protein is a protein of 43 kDa, which is derived from a 51 kDa precursor by proteolytic cleavage.

Its subcellular location is the nucleus. The protein localises to the chromosome. It is found in the telomere. Its function is as follows. RNA-binding protein required for assembly of the holoenzyme telomerase ribonucleoprotein (RNP) complex. Specifically binds telomerase RNA and promotes its assembly with catalytic subunit p123, thereby stimulating enzymatic activity and processivity of p123. Telomerase is a ribonucleoprotein enzyme essential that copies new telomeric repeats onto chromosome ends and functions to maintain cell division. The chain is La-related protein 7 homolog from Euplotes aediculatus (Ciliate).